The primary structure comprises 144 residues: Large ribosomal subunit protein uL13 (144 aa).

The protein belongs to the universal ribosomal protein uL13 family. In terms of assembly, part of the 50S ribosomal subunit.

In terms of biological role, this protein is one of the early assembly proteins of the 50S ribosomal subunit, although it is not seen to bind rRNA by itself. It is important during the early stages of 50S assembly. This is Large ribosomal subunit protein uL13 from Legionella pneumophila (strain Paris).